Reading from the N-terminus, the 328-residue chain is E3 ubiquitin-protein ligase RING1-like (328 aa).

N-acetylserine is present on serine 2. Residues cysteine 216–arginine 257 form an RING-type; atypical zinc finger. Residues aspartate 264–aspartate 328 form a disordered region. A compositionally biased stretch (gly residues) spans serine 306–asparagine 319.

Post-translationally, auto-ubiquitinated as part of the enzymatic reaction. As to expression, expressed in leaves, roots, trichomes, stipules, and also in anthers and stigma of flowers.

The catalysed reaction is S-ubiquitinyl-[E2 ubiquitin-conjugating enzyme]-L-cysteine + [acceptor protein]-L-lysine = [E2 ubiquitin-conjugating enzyme]-L-cysteine + N(6)-ubiquitinyl-[acceptor protein]-L-lysine.. It functions in the pathway protein modification; protein ubiquitination. In terms of biological role, E3 ubiquitin-protein ligase which accepts ubiquitin from an E2 ubiquitin-conjugating enzyme in the form of a thioester and then directly transfers the ubiquitin to targeted substrates. Promotes polyubiquitination of target proteins. The polypeptide is E3 ubiquitin-protein ligase RING1-like (Arabidopsis thaliana (Mouse-ear cress)).